We begin with the raw amino-acid sequence, 22 residues long: Cytin chain B (22 aa).

The protein belongs to the protease inhibitor I13 (potato type I serine protease inhibitor) family. Heterodimer of an A chain and a B chain, linked by a disulfide bond.

Its function is as follows. Inhibitor of chymotrypsin. This chain is Cytin chain B, found in Theromyzon tessulatum (Duck leech).